Here is a 517-residue protein sequence, read N- to C-terminus: Crotonobetaine/carnitine--CoA ligase (517 aa).

This sequence belongs to the ATP-dependent AMP-binding enzyme family.

It carries out the reaction 4-(trimethylamino)butanoate + ATP + CoA = 4-(trimethylamino)butanoyl-CoA + AMP + diphosphate. The catalysed reaction is crotonobetaine + ATP + CoA = crotonobetainyl-CoA + AMP + diphosphate. The enzyme catalyses (R)-carnitine + ATP + CoA = (R)-carnitinyl-CoA + AMP + diphosphate. Its pathway is amine and polyamine metabolism; carnitine metabolism. In terms of biological role, catalyzes the transfer of CoA to carnitine, generating the initial carnitinyl-CoA needed for the CaiB reaction cycle. Also has activity toward crotonobetaine and gamma-butyrobetaine. This chain is Crotonobetaine/carnitine--CoA ligase, found in Escherichia fergusonii (strain ATCC 35469 / DSM 13698 / CCUG 18766 / IAM 14443 / JCM 21226 / LMG 7866 / NBRC 102419 / NCTC 12128 / CDC 0568-73).